A 208-amino-acid polypeptide reads, in one-letter code: Ribosomal RNA large subunit methyltransferase E (208 aa).

S-adenosyl-L-methionine-binding residues include Gly62, Trp64, Asp82, Asp98, and Asp123. The Proton acceptor role is filled by Lys163.

This sequence belongs to the class I-like SAM-binding methyltransferase superfamily. RNA methyltransferase RlmE family.

It is found in the cytoplasm. The catalysed reaction is uridine(2552) in 23S rRNA + S-adenosyl-L-methionine = 2'-O-methyluridine(2552) in 23S rRNA + S-adenosyl-L-homocysteine + H(+). Its function is as follows. Specifically methylates the uridine in position 2552 of 23S rRNA at the 2'-O position of the ribose in the fully assembled 50S ribosomal subunit. In Haemophilus ducreyi (strain 35000HP / ATCC 700724), this protein is Ribosomal RNA large subunit methyltransferase E.